The sequence spans 292 residues: MSLVSAALFGLVQALTEFLPVSSTAHLLVFGELLGHSLDDRRFRAFVTIIQAGTTLAVLIYFRADIARLVAASTRGLVRGKPLGTPEARLGWYILLGTLPAALAGKLLERRIEALGNWVIAGSLVGLGLVLLAAERLASHRRRVEDVGPGDALLIGVAQALALVPGSSRSGTTITGGMLLGFTREAAARFSFLLSVPITLAAGAYKLWSTVPDLRGEVAWTVATVVGTVVSAVAGYLVIDWLLAWLRTRTTYVFVVWRIAAGAAIAALILSGVLPAGAEAPPPPPPALHAAP.

The next 7 membrane-spanning stretches (helical) occupy residues 1–21 (MSLV…FLPV), 46–66 (FVTI…RADI), 88–108 (ARLG…GKLL), 114–134 (ALGN…LLAA), 192–212 (FLLS…STVP), 225–245 (VVGT…LLAW), and 253–273 (VFVV…LSGV).

This sequence belongs to the UppP family.

The protein localises to the cell inner membrane. It carries out the reaction di-trans,octa-cis-undecaprenyl diphosphate + H2O = di-trans,octa-cis-undecaprenyl phosphate + phosphate + H(+). In terms of biological role, catalyzes the dephosphorylation of undecaprenyl diphosphate (UPP). Confers resistance to bacitracin. This chain is Undecaprenyl-diphosphatase, found in Anaeromyxobacter dehalogenans (strain 2CP-C).